We begin with the raw amino-acid sequence, 90 residues long: MNADGPVVNVHVLFFAKSRELANTPRSTVEVPTEITATELLDHLVSKFGLTSIRDNLILAHNESYIDNLSDRILFKEGDELAIIPPLSGG.

Gly-90 bears the 1-thioglycine; alternate mark. Gly-90 bears the Glycyl adenylate; alternate mark.

Belongs to the MoaD family. MOCS2A subfamily. In terms of assembly, heterotetramer; composed of 2 small (Mocs2A) and 2 large (Mocs2B) subunits. In terms of processing, C-terminal thiocarboxylation occurs in 2 steps, it is first acyl-adenylated (-COAMP) via the hesA/moeB/thiF part of MOCS3, then thiocarboxylated (-COSH) via the rhodanese domain of MOCS3.

The protein resides in the cytoplasm. Its pathway is cofactor biosynthesis; molybdopterin biosynthesis. Functionally, acts as a sulfur carrier required for molybdopterin biosynthesis. Component of the molybdopterin synthase complex that catalyzes the conversion of precursor Z into molybdopterin by mediating the incorporation of 2 sulfur atoms into precursor Z to generate a dithiolene group. In the complex, serves as sulfur donor by being thiocarboxylated (-COSH) at its C-terminus by MOCS3. After interaction with Mocs2B, the sulfur is then transferred to precursor Z to form molybdopterin. Involved during biosynthesis of the molybdenum cofactor. This chain is Molybdopterin synthase sulfur carrier subunit, found in Drosophila melanogaster (Fruit fly).